Here is a 218-residue protein sequence, read N- to C-terminus: Small ribosomal subunit protein uS3 (218 aa).

Residues 38–106 (LRNDLKKKLM…PVHLNIEEVK (69 aa)) enclose the KH type-2 domain.

It belongs to the universal ribosomal protein uS3 family. In terms of assembly, part of the 30S ribosomal subunit. Forms a tight complex with proteins S10 and S14.

Functionally, binds the lower part of the 30S subunit head. Binds mRNA in the 70S ribosome, positioning it for translation. The polypeptide is Small ribosomal subunit protein uS3 (Legionella pneumophila (strain Paris)).